A 175-amino-acid chain; its full sequence is RNA pyrophosphohydrolase (175 aa).

The Nudix hydrolase domain maps to 6-149; sequence GYRPNVGIVI…KRDVYRRVMK (144 aa). Residues 38 to 59 carry the Nudix box motif; that stretch reads GGINAGETAEQAMYRELFEEVG.

This sequence belongs to the Nudix hydrolase family. RppH subfamily. It depends on a divalent metal cation as a cofactor.

Functionally, accelerates the degradation of transcripts by removing pyrophosphate from the 5'-end of triphosphorylated RNA, leading to a more labile monophosphorylated state that can stimulate subsequent ribonuclease cleavage. This is RNA pyrophosphohydrolase from Sodalis glossinidius (strain morsitans).